The primary structure comprises 578 residues: Proline--tRNA ligase (578 aa).

The protein belongs to the class-II aminoacyl-tRNA synthetase family. ProS type 1 subfamily. As to quaternary structure, homodimer.

The protein localises to the cytoplasm. It carries out the reaction tRNA(Pro) + L-proline + ATP = L-prolyl-tRNA(Pro) + AMP + diphosphate. Functionally, catalyzes the attachment of proline to tRNA(Pro) in a two-step reaction: proline is first activated by ATP to form Pro-AMP and then transferred to the acceptor end of tRNA(Pro). As ProRS can inadvertently accommodate and process non-cognate amino acids such as alanine and cysteine, to avoid such errors it has two additional distinct editing activities against alanine. One activity is designated as 'pretransfer' editing and involves the tRNA(Pro)-independent hydrolysis of activated Ala-AMP. The other activity is designated 'posttransfer' editing and involves deacylation of mischarged Ala-tRNA(Pro). The misacylated Cys-tRNA(Pro) is not edited by ProRS. The protein is Proline--tRNA ligase of Paraburkholderia phymatum (strain DSM 17167 / CIP 108236 / LMG 21445 / STM815) (Burkholderia phymatum).